The sequence spans 227 residues: MNHLDRLERKIGYRFNDIALLKQALTHRSAATQHNERLEFLGDSILNFTIAEALYHQFPRCNEGELSRMRATLVREPTLAILARQFELGDYMSLGSGELKNGGFRRESILADCVEAIIGAMSLDQGLAVTTQVIRNWYQQLLAEIKPGDNQKDAKTRLQEYLQGKHLPLPTYEVVNIQGEAHCQIFTVECKVKSAGKIDRTFVAKGSSRRKAEQAAAEQILKELDIK.

The RNase III domain maps to 4–126 (LDRLERKIGY…IIGAMSLDQG (123 aa)). Glu39 is a Mg(2+) binding site. Residue Asp43 is part of the active site. Asp112 and Glu115 together coordinate Mg(2+). The active site involves Glu115. The region spanning 153–226 (DAKTRLQEYL…AEQILKELDI (74 aa)) is the DRBM domain.

This sequence belongs to the ribonuclease III family. Homodimer. The cofactor is Mg(2+).

Its subcellular location is the cytoplasm. The catalysed reaction is Endonucleolytic cleavage to 5'-phosphomonoester.. In terms of biological role, digests double-stranded RNA. Involved in the processing of primary rRNA transcript to yield the immediate precursors to the large and small rRNAs (23S and 16S). Processes some mRNAs, and tRNAs when they are encoded in the rRNA operon. Processes pre-crRNA and tracrRNA of type II CRISPR loci if present in the organism. This is Ribonuclease 3 from Haemophilus influenzae (strain PittGG).